A 171-amino-acid chain; its full sequence is Peptide deformylase (171 aa).

Fe cation-binding residues include Cys-92 and His-134. Residue Glu-135 is part of the active site. Residue His-138 participates in Fe cation binding.

Belongs to the polypeptide deformylase family. Fe(2+) serves as cofactor.

The catalysed reaction is N-terminal N-formyl-L-methionyl-[peptide] + H2O = N-terminal L-methionyl-[peptide] + formate. Removes the formyl group from the N-terminal Met of newly synthesized proteins. Requires at least a dipeptide for an efficient rate of reaction. N-terminal L-methionine is a prerequisite for activity but the enzyme has broad specificity at other positions. The chain is Peptide deformylase from Polynucleobacter necessarius subsp. necessarius (strain STIR1).